A 114-amino-acid polypeptide reads, in one-letter code: uncharacterized protein (114 aa).

Residues 31-72 adopt a coiled-coil conformation; sequence EFEKLVSEQMKTMDKLLDLQSELDRCKQIEAELRHLERDARL.

This is an uncharacterized protein from Bacillus subtilis (strain 168).